The following is a 551-amino-acid chain: Glucose-6-phosphate isomerase 2 (551 aa).

Residue glutamate 359 is the Proton donor of the active site. Catalysis depends on residues histidine 390 and lysine 514.

This sequence belongs to the GPI family.

The protein localises to the cytoplasm. The enzyme catalyses alpha-D-glucose 6-phosphate = beta-D-fructose 6-phosphate. Its pathway is carbohydrate biosynthesis; gluconeogenesis. It functions in the pathway carbohydrate degradation; glycolysis; D-glyceraldehyde 3-phosphate and glycerone phosphate from D-glucose: step 2/4. Functionally, catalyzes the reversible isomerization of glucose-6-phosphate to fructose-6-phosphate. This is Glucose-6-phosphate isomerase 2 from Streptomyces coelicolor (strain ATCC BAA-471 / A3(2) / M145).